The sequence spans 312 residues: DNA-directed RNA polymerase subunit alpha (312 aa).

Residues 1–226 form an alpha N-terminal domain (alpha-NTD) region; it reads MIEFEKPIIT…EHLNLFTDLT (226 aa). An alpha C-terminal domain (alpha-CTD) region spans residues 242-312; that stretch reads NDEKVLDRTI…DLGLGLKNDK (71 aa).

This sequence belongs to the RNA polymerase alpha chain family. As to quaternary structure, homodimer. The RNAP catalytic core consists of 2 alpha, 1 beta, 1 beta' and 1 omega subunit. When a sigma factor is associated with the core the holoenzyme is formed, which can initiate transcription.

The enzyme catalyses RNA(n) + a ribonucleoside 5'-triphosphate = RNA(n+1) + diphosphate. DNA-dependent RNA polymerase catalyzes the transcription of DNA into RNA using the four ribonucleoside triphosphates as substrates. This chain is DNA-directed RNA polymerase subunit alpha, found in Streptococcus agalactiae serotype Ia (strain ATCC 27591 / A909 / CDC SS700).